A 175-amino-acid chain; its full sequence is MEKFSVSAILLLVAISGTLAKDTTVKSGAKKDPKDSRPKLPQTLSRGWGDQLIWTQTYEEALYRSKTSNRPLMVIHHLDECPHSQALKKVFAEHKEIQKLAEQFVLLNLVYETTDKHLSPDGQYVPRIVFVDPSLTVRADITGRYSNRLYAYEPSDTALLYDNMKKALKLLKTEL.

Residues methionine 1 to alanine 20 form the signal peptide. A required to promote cell adhesion region spans residues lysine 21–leucine 40. The tract at residues threonine 24–leucine 44 is disordered. Positions alanine 29 to proline 38 are enriched in basic and acidic residues. Short sequence motifs (homodimer stabilization; interchain) lie at residues serine 45–tryptophan 54 and glutamate 60–threonine 67.

This sequence belongs to the AGR family. As to quaternary structure, monomer and homodimer. Interacts with LYPD3 and DAG1 (alphaDAG1). Interacts with MUC2; disulfide-linked. Expressed in lung, skeletal muscle, testis, liver, stomach, colon, small intestine, the goblet cells of the intestine and the mucuous neck cells of the stomach.

Its subcellular location is the secreted. The protein localises to the endoplasmic reticulum. In terms of biological role, required for MUC2 post-transcriptional synthesis and secretion. May play a role in the production of mucus by intestinal cells. Proto-oncogene that may play a role in cell migration, cell differentiation and cell growth. Promotes cell adhesion. The chain is Anterior gradient protein 2 homolog (Agr2) from Mus musculus (Mouse).